Consider the following 481-residue polypeptide: Cysteine--tRNA ligase (481 aa).

C27 serves as a coordination point for Zn(2+). The 'HIGH' region signature appears at 29–39 (PTVYNYAHIGN). Zn(2+) is bound by residues C222, H247, and E251. Positions 279-283 (KMSKS) match the 'KMSKS' region motif. ATP is bound at residue K282.

The protein belongs to the class-I aminoacyl-tRNA synthetase family. As to quaternary structure, monomer. Zn(2+) serves as cofactor.

It is found in the cytoplasm. It catalyses the reaction tRNA(Cys) + L-cysteine + ATP = L-cysteinyl-tRNA(Cys) + AMP + diphosphate. The polypeptide is Cysteine--tRNA ligase (Borrelia turicatae (strain 91E135)).